The primary structure comprises 769 residues: Polymeric immunoglobulin receptor (769 aa).

An N-terminal signal peptide occupies residues 1–18 (MRLSLFALLVTVFSGVST). Residues 19–643 (QSPIFGPQDV…SAGGQSGSSK (625 aa)) are Extracellular-facing. The 106-residue stretch at 21 to 126 (PIFGPQDVSS…RGLFFDVSLE (106 aa)) folds into the Ig-like V-type 1; required for binding to polymeric IgA and IgM domain. Residues Cys40 and Cys110 are joined by a disulfide bond. Asn90, Asn135, and Asn206 each carry an N-linked (GlcNAc...) asparagine glycan. 4 Ig-like V-type domains span residues 135 to 237 (NDTH…DLQV), 240 to 341 (PEPE…VQAW), 353 to 457 (NSRS…LQVA), and 463 to 563 (PDLE…IYVA). Cystine bridges form between Cys152–Cys220, Cys257–Cys324, and Cys370–Cys440. The N-linked (GlcNAc...) asparagine glycan is linked to Asn471. The cysteines at positions 484 and 546 are disulfide-linked. 2 disordered regions span residues 569–604 (RGSPHINPTDANARAKDAPEEEAMESSVREDENKAN) and 619–640 (AGDQAQENRASGNAGSAGGQSG). The segment covering 595–604 (SVREDENKAN) has biased composition (basic and acidic residues). Residues 644–666 (VLFSTLVPLGLVLAVGAVAVWVA) traverse the membrane as a helical segment. Residues 667-769 (RVRHRKNVDR…AQVHDGPQEA (103 aa)) are Cytoplasmic-facing. A phosphoserine mark is found at Ser678, Ser687, Ser694, and Ser740. The tract at residues 719-741 (EIETTTECTTEPEESKKAKRSSK) is disordered. Residues 731-741 (EESKKAKRSSK) show a composition bias toward basic and acidic residues.

In terms of assembly, interacts (mainly via CDR1-like domain) with dimeric IgA. Interacts (mainly via CDR2-like domain) with pentameric IgM. As to quaternary structure, either free or part of the secretory IgA (sIgA) complex that consists of two, four or five IgA monomers, and two additional non-Ig polypeptides, namely the JCHAIN and the secretory component (the proteolytic product of PIGR). Free secretory component interacts with bacterial antigens toxA of C.difficile and eae of E.coli. N-glycosylated. N-glycosylation is required for anchoring IgA molecules to mucus, but is not necessary for Ig binding.

The protein localises to the cell membrane. Its subcellular location is the secreted. Its function is as follows. Mediates selective transcytosis of polymeric IgA and IgM across mucosal epithelial cells. Binds polymeric IgA and IgM at the basolateral surface of epithelial cells. The complex is then transported across the cell to be secreted at the apical surface. During this process, a cleavage occurs that separates the extracellular (known as the secretory component) from the transmembrane segment. Functionally, through its N-linked glycans ensures anchoring of secretory IgA (sIgA) molecules to mucus lining the epithelial surface to neutralize extracellular pathogens. On its own (free form) may act as a non-specific microbial scavenger to prevent pathogen interaction with epithelial cells. This Rattus norvegicus (Rat) protein is Polymeric immunoglobulin receptor (Pigr).